The sequence spans 388 residues: 3-sulfinopropanoyl-CoA desulfinase (388 aa).

FAD contacts are provided by residues 121–124, S130, and 153–156; these read ICIT and HWIT. Residue 240 to 241 coordinates substrate; it reads YN. FAD is bound by residues R269, Q336, 363 to 367, and Q384; that span reads GGTAQ.

It belongs to the acyl-CoA dehydrogenase family. As to quaternary structure, homotrimer or homotetramer. It depends on FAD as a cofactor.

The enzyme catalyses 3-sulfinopropanoyl-CoA + H2O = propanoyl-CoA + sulfite + H(+). Functionally, catalyzes the conversion 3-sulfinopropanoyl-CoA (3SP-CoA) to propanoyl-CoA by abstraction of sulfite. Does not show dehydrogenase activity. The protein is 3-sulfinopropanoyl-CoA desulfinase of Paraburkholderia xenovorans (strain LB400).